The sequence spans 959 residues: Ribonucleoside-diphosphate reductase large subunit (959 aa).

Substrate-binding positions include T68, 83 to 84, and G112; that span reads SC. Residues C84 and C626 are joined by a disulfide bond. The Proton acceptor role is filled by N270. In terms of domain architecture, DOD-type homing endonuclease spans 378–508; it reads LPTLFGNSEH…IQLLLIGMGV (131 aa). C611 serves as the catalytic Cysteine radical intermediate. The active-site Proton acceptor is the E613. Residue 751 to 755 coordinates substrate; it reads PTATS.

This sequence belongs to the ribonucleoside diphosphate reductase large chain family. Heterotetramer composed of a homodimer of the large subunit (R1) and a homodimer of the small subunit (R2). Larger multisubunit protein complex are also active, composed of (R1)n(R2)n.

It carries out the reaction a 2'-deoxyribonucleoside 5'-diphosphate + [thioredoxin]-disulfide + H2O = a ribonucleoside 5'-diphosphate + [thioredoxin]-dithiol. Under complex allosteric control mediated by deoxynucleoside triphosphates and ATP binding. The type of nucleotide bound at the specificity site determines substrate preference. It seems probable that ATP makes the enzyme reduce CDP and UDP, dGTP favors ADP reduction and dTTP favors GDP reduction. Its function is as follows. Ribonucleoside-diphosphate reductase holoenzyme provides the precursors necessary for viral DNA synthesis. Allows virus growth in non-dividing cells. Catalyzes the biosynthesis of deoxyribonucleotides from the corresponding ribonucleotides. The protein is Ribonucleoside-diphosphate reductase large subunit of Acheta domesticus (House cricket).